A 234-amino-acid chain; its full sequence is 2-amino-5-formylamino-6-ribosylaminopyrimidin-4(3H)-one 5'-monophosphate deformylase (234 aa).

Fe cation is bound by residues E29, H31, D40, and H109.

It belongs to the creatininase superfamily. FAPy deformylase family. In terms of assembly, homodimer. The cofactor is Fe(2+). Zn(2+) serves as cofactor.

It catalyses the reaction 2-amino-5-formylamino-6-(5-phospho-D-ribosylamino)pyrimidin-4(3H)-one + H2O = 2,5-diamino-6-(1-D-ribosylamino)pyrimidin-4(3H)-one 5'-phosphate + formate + H(+). The protein operates within cofactor biosynthesis; coenzyme F420 biosynthesis. It participates in cofactor biosynthesis; riboflavin biosynthesis. In terms of biological role, catalyzes the hydrolysis of the formamide of 2-amino-5-formylamino-6-ribosylamino-4(3H)-pyrimidinone 5'-monophosphate (FAPy) to form 2,5-diamino-6-ribosylamino-4(3H)-pyrimidinone 5'-phosphate (APy). In Methanobrevibacter ruminantium (strain ATCC 35063 / DSM 1093 / JCM 13430 / OCM 146 / M1) (Methanobacterium ruminantium), this protein is 2-amino-5-formylamino-6-ribosylaminopyrimidin-4(3H)-one 5'-monophosphate deformylase.